Reading from the N-terminus, the 395-residue chain is Tyrosine--tRNA ligase 2 (395 aa).

The short motif at 42-51 (PTAPDIHLGH) is the 'HIGH' region element. Residues 226-230 (KMSKS) carry the 'KMSKS' region motif. An ATP-binding site is contributed by K229. The 61-residue stretch at 334–394 (IAISNLLKEA…GKRKFARVTI (61 aa)) folds into the S4 RNA-binding domain.

The protein belongs to the class-I aminoacyl-tRNA synthetase family. TyrS type 2 subfamily. As to quaternary structure, homodimer.

The protein resides in the cytoplasm. It carries out the reaction tRNA(Tyr) + L-tyrosine + ATP = L-tyrosyl-tRNA(Tyr) + AMP + diphosphate + H(+). Functionally, catalyzes the attachment of tyrosine to tRNA(Tyr) in a two-step reaction: tyrosine is first activated by ATP to form Tyr-AMP and then transferred to the acceptor end of tRNA(Tyr). The chain is Tyrosine--tRNA ligase 2 from Vibrio cholerae serotype O1 (strain ATCC 39315 / El Tor Inaba N16961).